Here is a 190-residue protein sequence, read N- to C-terminus: Ribose 1,5-bisphosphate phosphokinase PhnN (190 aa).

An ATP-binding site is contributed by 19–26; that stretch reads GPSGVGKD.

This sequence belongs to the ribose 1,5-bisphosphokinase family.

It catalyses the reaction alpha-D-ribose 1,5-bisphosphate + ATP = 5-phospho-alpha-D-ribose 1-diphosphate + ADP. It participates in metabolic intermediate biosynthesis; 5-phospho-alpha-D-ribose 1-diphosphate biosynthesis; 5-phospho-alpha-D-ribose 1-diphosphate from D-ribose 5-phosphate (route II): step 3/3. Its function is as follows. Catalyzes the phosphorylation of ribose 1,5-bisphosphate to 5-phospho-D-ribosyl alpha-1-diphosphate (PRPP). The sequence is that of Ribose 1,5-bisphosphate phosphokinase PhnN from Ruegeria sp. (strain TM1040) (Silicibacter sp.).